Here is a 589-residue protein sequence, read N- to C-terminus: Formate--tetrahydrofolate ligase (589 aa).

74–81 (TPFGEGKS) serves as a coordination point for ATP.

This sequence belongs to the formate--tetrahydrofolate ligase family.

The catalysed reaction is (6S)-5,6,7,8-tetrahydrofolate + formate + ATP = (6R)-10-formyltetrahydrofolate + ADP + phosphate. It functions in the pathway one-carbon metabolism; tetrahydrofolate interconversion. In Thermodesulfovibrio yellowstonii (strain ATCC 51303 / DSM 11347 / YP87), this protein is Formate--tetrahydrofolate ligase.